The chain runs to 152 residues: Nucleoside diphosphate kinase B (152 aa).

The interval 1-66 (MAHQERTFIA…DRPFYPGLVK (66 aa)) is interaction with AKAP13. ATP-binding residues include lysine 12, phenylalanine 60, arginine 88, threonine 94, arginine 105, and asparagine 115. Residue histidine 118 is the Pros-phosphohistidine intermediate of the active site.

It belongs to the NDK family. Hexamer of two different chains: An and B (A6, A5B, A4B2, A3B3, A2B4, AB5, B6). Interacts with CAPN8. Interacts with AKAP13. Interacts with ITGB1BP1 (via C-terminal domain region). Interacts with BCL2L10. The cofactor is Mg(2+). Ubiquitous.

Its subcellular location is the cytoplasm. The protein localises to the cell projection. The protein resides in the lamellipodium. It is found in the ruffle. It localises to the nucleus. The enzyme catalyses a 2'-deoxyribonucleoside 5'-diphosphate + ATP = a 2'-deoxyribonucleoside 5'-triphosphate + ADP. The catalysed reaction is a ribonucleoside 5'-diphosphate + ATP = a ribonucleoside 5'-triphosphate + ADP. It catalyses the reaction ATP + protein L-histidine = ADP + protein N-phospho-L-histidine.. Major role in the synthesis of nucleoside triphosphates other than ATP. The ATP gamma phosphate is transferred to the NDP beta phosphate via a ping-pong mechanism, using a phosphorylated active-site intermediate. Negatively regulates Rho activity by interacting with AKAP13/LBC. Acts as a transcriptional activator of the MYC gene; binds DNA non-specifically. Binds to both single-stranded guanine- and cytosine-rich strands within the nuclease hypersensitive element (NHE) III(1) region of the MYC gene promoter. Does not bind to duplex NHE III(1). Has G-quadruplex (G4) DNA-binding activity, which is independent of its nucleotide-binding and kinase activity. Binds both folded and unfolded G4 with similar low nanomolar affinities. Stabilizes folded G4s regardless of whether they are prefolded or not. Exhibits histidine protein kinase activity. The protein is Nucleoside diphosphate kinase B (NME2) of Canis lupus familiaris (Dog).